A 414-amino-acid polypeptide reads, in one-letter code: Membrane protein UL43 (414 aa).

A run of 6 helical transmembrane segments spans residues 39 to 59 (GFAHLWLQAATLGFVGSVVLS), 61 to 81 (GPYADAMSGAFVIGSTGLGFL), 96 to 116 (AWLRLVGGGAAVALWSLGEAG), 121 to 141 (VPGPATQCLALGAAYAALLVL), 148 to 168 (LFLLAPRPLFVGTLGVVVGGL), and 184 to 204 (AAALTAAVVAGLGTTAAGDSF). Residues 225–253 (PRYAPEDAERPTDHGPLLPSTHHQRSPRV) form a disordered region. The span at 228–237 (APEDAERPTD) shows a compositional bias: basic and acidic residues. 2 helical membrane-spanning segments follow: residues 339 to 359 (GLMFVVPDIAVYAMLGGAVWI) and 383 to 403 (ATLRGLFFSVYALGFAAGVLV).

The protein belongs to the alphaherpesvirinae HHV-1 UL43 family.

The protein localises to the membrane. This is Membrane protein UL43 from Homo sapiens (Human).